The following is a 448-amino-acid chain: Protein arginine N-methyltransferase 2 (448 aa).

2 interaction with ESR1 regions span residues 1 to 289 and 145 to 287; these read MEAP…SALK and KESL…NLSA. One can recognise an SH3 domain in the interval 42 to 101; it reads LQPEEFVAIADYTATDETQLSFLRGEKILILRQTTADWWWGERAGCCGYIPANHLGKQLE. An asymmetric dimethylarginine mark is found at arginine 73 and arginine 84. Residues 95–219 form an interaction with RB1 region; it reads HLGKQLEEYD…DVVLPEKVDV (125 aa). In terms of domain architecture, SAM-dependent MTase PRMT-type spans 111–414; the sequence is DEEYFDSYGT…CCVTKKSGME (304 aa). Histidine 124, arginine 133, glycine 157, glutamate 180, and glutamate 209 together coordinate S-adenosyl-L-methionine. Catalysis depends on residues glutamate 223 and glutamate 232.

This sequence belongs to the class I-like SAM-binding methyltransferase superfamily. Protein arginine N-methyltransferase family. In terms of assembly, self-associates. Interacts with HNRNPUL1. Interacts with NFKBIA. Interacts with NCOA6 coactivator. Interacts (via SH3 domain) with PRMT8. Interacts with AR. Interacts with ESR1, ESR2, PGR, PPARG, RARA, RXRA and THRB. Interacts with RB1 and E2F1. In terms of tissue distribution, expressed in liver, pancreas, lung, brain, skeletal muscle, heart, muscle and fat.

The protein localises to the cytoplasm. It localises to the nucleus. It catalyses the reaction L-arginyl-[protein] + 2 S-adenosyl-L-methionine = N(omega),N(omega)-dimethyl-L-arginyl-[protein] + 2 S-adenosyl-L-homocysteine + 2 H(+). In terms of biological role, arginine methyltransferase that methylates the guanidino nitrogens of arginyl residues in proteins such as STAT3, FBL, histone H4. May inhibit NF-kappa-B transcription, and promote apoptosis. Represses E2F1 transcriptional activity (in a RB1-dependent manner). Has a negative regulation effect on G1 to S transition of mitotic cell cycle. Involved in growth regulation. Acts as a coactivator (with NCOA2) of the androgen receptor (AR)-mediated transactivation. Acts as a coactivator (with estrogen) of estrogen receptor (ER)-mediated transactivation. Enhances PGR, PPARG, RARA-mediated transactivation. This chain is Protein arginine N-methyltransferase 2 (Prmt2), found in Mus musculus (Mouse).